Here is a 355-residue protein sequence, read N- to C-terminus: DNA-binding protein RHL1 (355 aa).

Disordered regions lie at residues 1 to 26, 181 to 215, and 229 to 355; these read MVRASSSKKGGSKGGDKDDAESKQRK, DFQGGAGGAASVKKLASPEIGSQPTETDSPEVDNE, and IQVT…SSKA. The span at 14-23 shows a compositional bias: basic and acidic residues; it reads GGDKDDAESK. 2 stretches are compositionally biased toward low complexity: residues 230 to 246 and 260 to 274; these read QVTPPVQLTPPVQVTPV and AETSSEASSGESEGN. Composition is skewed to basic and acidic residues over residues 281–296 and 309–326; these read KPLLEPESSTRSREES and LPEELPAKREKLKSKDSK. The segment covering 344–355 has biased composition (low complexity); sequence AGTSKAKSSSKA.

Interacts with BIN4 and TOP6A, but not with TOP6B. In terms of tissue distribution, expressed inproliferating and endoreduplicating cells.

It localises to the nucleus. Functionally, component of the DNA topoisomerase VI complex involved in chromatin organization and progression of endoreduplication cycles. Binds to DNA. Required for endoreduplication beyond 8C. This Arabidopsis thaliana (Mouse-ear cress) protein is DNA-binding protein RHL1 (RHL1).